Reading from the N-terminus, the 446-residue chain is Glutamine synthetase (446 aa).

One can recognise a GS beta-grasp domain in the interval 14–106 (NNVKFIRFQF…VICDVYTTNG (93 aa)). Residues 113-446 (PRGCLKRVLA…DWETKQYLKI (334 aa)) form the GS catalytic domain. 2 residues coordinate Mg(2+): E137 and E139. Residue E187 coordinates ATP. The Mg(2+) site is built by E192 and E199. Residues 243 to 244 (NG) and G244 contribute to the L-glutamate site. Mg(2+) is bound at residue H248. Residues 250–252 (HQS) and S252 each bind ATP. Residues R301, E307, and R319 each contribute to the L-glutamate site. Residues R319, R324, and K331 each contribute to the ATP site. E336 contributes to the Mg(2+) binding site. R338 lines the L-glutamate pocket.

Belongs to the glutamine synthetase family. As to quaternary structure, oligomer of 12 subunits arranged in the form of two hexagons. The cofactor is Mg(2+).

Its subcellular location is the cytoplasm. The enzyme catalyses L-glutamate + NH4(+) + ATP = L-glutamine + ADP + phosphate + H(+). Functionally, probably involved in nitrogen metabolism via ammonium assimilation. Catalyzes the ATP-dependent biosynthesis of glutamine from glutamate and ammonia. The polypeptide is Glutamine synthetase (Methanococcus maripaludis (strain DSM 14266 / JCM 13030 / NBRC 101832 / S2 / LL)).